A 337-amino-acid polypeptide reads, in one-letter code: Ferrochelatase (337 aa).

Residues histidine 189 and glutamate 293 each contribute to the Fe cation site.

It belongs to the ferrochelatase family.

The protein resides in the cytoplasm. It catalyses the reaction heme b + 2 H(+) = protoporphyrin IX + Fe(2+). The protein operates within porphyrin-containing compound metabolism; protoheme biosynthesis; protoheme from protoporphyrin-IX: step 1/1. Catalyzes the ferrous insertion into protoporphyrin IX. This is Ferrochelatase from Pseudomonas putida (strain W619).